The primary structure comprises 372 residues: Aminomethyltransferase (372 aa).

Belongs to the GcvT family. As to quaternary structure, the glycine cleavage system is composed of four proteins: P, T, L and H.

The catalysed reaction is N(6)-[(R)-S(8)-aminomethyldihydrolipoyl]-L-lysyl-[protein] + (6S)-5,6,7,8-tetrahydrofolate = N(6)-[(R)-dihydrolipoyl]-L-lysyl-[protein] + (6R)-5,10-methylene-5,6,7,8-tetrahydrofolate + NH4(+). Its function is as follows. The glycine cleavage system catalyzes the degradation of glycine. The sequence is that of Aminomethyltransferase from Synechocystis sp. (strain ATCC 27184 / PCC 6803 / Kazusa).